The primary structure comprises 464 residues: Alpha-2A adrenergic receptor (464 aa).

The Extracellular portion of the chain corresponds to 1–47 (MFRQEQRWPRQLWPMGSLQPDSGNASWNGTEGPGGGTRATPYSLQVT). Residues 13–34 (WPMGSLQPDSGNASWNGTEGPG) form a disordered region. Polar residues predominate over residues 19 to 29 (QPDSGNASWNG). Residues Asn24 and Asn28 are each glycosylated (N-linked (GlcNAc...) asparagine). The chain crosses the membrane as a helical span at residues 48 to 73 (VTLVCLVGLLILLTVFGNVLVIIAVF). At 74-84 (TSRALKAPQNL) the chain is on the cytoplasmic side. A helical transmembrane segment spans residues 85-110 (FLVSLASADILVATLVIPFSLANEVM). Residues 111-120 (GYWYFGKAWC) lie on the Extracellular side of the membrane. Cys120 and Cys201 are oxidised to a cystine. Residues 121–143 (EIYLALDVLFCTSSIVHLCAISL) form a helical membrane-spanning segment. At 144-163 (DRYWSITQAIEYNLKRTPRR) the chain is on the cytoplasmic side. The chain crosses the membrane as a helical span at residues 164–187 (IKAIIVTVWVISAVISFPPLISFE). Topologically, residues 188-206 (KAGGGGQQPAEPRCEINDQ) are extracellular. A helical transmembrane segment spans residues 207 to 231 (KWYVISSSIGSFFAPCLIMILVYVR). The Cytoplasmic segment spans residues 232 to 388 (IYQIAKRRTR…RQNREKRFTF (157 aa)). A disordered region spans residues 240 to 378 (TRVPPSRRGP…GGAKASRWRG (139 aa)). The span at 251–268 (AHAAAPPGGAERRPNGLG) shows a compositional bias: low complexity. Residues 312–329 (SSEHAERPPGARRPERGL) show a composition bias toward basic and acidic residues. Ser345 is subject to Phosphoserine. Positions 354-363 (AGSGTSGSGP) are enriched in gly residues. Arg367 carries the post-translational modification Omega-N-methylarginine. A helical membrane pass occupies residues 389 to 413 (VLAVVIGVFVVCWFPFFFTYTLTAV). The Extracellular segment spans residues 414–423 (GCSVPRTLFK). A helical transmembrane segment spans residues 424–444 (FFFWFGYCNSSLNPVIYTIFN). Residues 445–464 (HDFRRAFKKILCRGDRKRIV) lie on the Cytoplasmic side of the membrane. The S-palmitoyl cysteine moiety is linked to residue Cys456.

Belongs to the G-protein coupled receptor 1 family. Adrenergic receptor subfamily. ADRA2A sub-subfamily. In terms of assembly, component of the ADA2A-containing complex (ATAC), composed of KAT14, KAT2A, TADA2L, TADA3L, ZZ3, MBIP, WDR5, YEATS2, CCDC101 and DR1.

The protein resides in the cell membrane. Alpha-2 adrenergic receptors mediate the catecholamine-induced inhibition of adenylate cyclase through the action of G proteins. Component of the ATAC complex, a complex with histone acetyltransferase activity on histones H3 and H4. This Cavia porcellus (Guinea pig) protein is Alpha-2A adrenergic receptor.